The following is a 465-amino-acid chain: MGSKTAENESQGGGNAPPSSTKATATGGEPRGAHWSRDGDGTLGEGEGDDDADGDNTSCAPAVPLNPQTAPSTNSKKRKKRPKKKTSALKQSSPPRIPLADLFPDHQYPHGEAQVYEPGLENVARTTADEVRHHSRHHIEDDTFLNDYRKAAEVHRQVRRWTQESVRPGQTLTEIAMGIEDGVRALLDNAGLDTGQGLISGLGFPTGLSLNNCVAHYTPNPGQREVVLDSSDVMKVDFGVHINGWIVDSAFTMSFDPTYDNLLAAVKDATNTGIKNAGVDVRISDVSAAIQEAMESYEVDINGRTFPVKAVRNITGHNIEQYRIHAGKSIPFVKNNDNTKMEEGEIFAIETFGTTGRGYLFDGPGVYGYGKDPSAPKRITSHLASAKSLYQKINENFGSLVFCRRYLERLGVESYLAGMNNLVSNGYVEVYQPLMDVRGSYSAQFEHTILLRESCKEVISRGDDY.

The interval 1–100 is disordered; the sequence is MGSKTAENES…QSSPPRIPLA (100 aa). The span at 31-40 shows a compositional bias: basic and acidic residues; the sequence is RGAHWSRDGD. Over residues 75 to 87 the composition is skewed to basic residues; sequence SKKRKKRPKKKTS. Residue histidine 216 coordinates substrate. Residues aspartate 237, aspartate 248, and histidine 317 each contribute to the a divalent metal cation site. Histidine 325 contributes to the substrate binding site. Residues glutamate 350 and glutamate 446 each contribute to the a divalent metal cation site.

It belongs to the peptidase M24A family. Methionine aminopeptidase eukaryotic type 2 subfamily. Requires Co(2+) as cofactor. The cofactor is Zn(2+). Mn(2+) serves as cofactor. It depends on Fe(2+) as a cofactor.

The protein localises to the cytoplasm. It carries out the reaction Release of N-terminal amino acids, preferentially methionine, from peptides and arylamides.. Functionally, cotranslationally removes the N-terminal methionine from nascent proteins. The N-terminal methionine is often cleaved when the second residue in the primary sequence is small and uncharged (Met-Ala-, Cys, Gly, Pro, Ser, Thr, or Val). This chain is Methionine aminopeptidase 2-1, found in Penicillium rubens (strain ATCC 28089 / DSM 1075 / NRRL 1951 / Wisconsin 54-1255) (Penicillium chrysogenum).